Here is a 143-residue protein sequence, read N- to C-terminus: Transcriptional regulator MraZ (143 aa).

2 consecutive SpoVT-AbrB domains span residues 5–47 (EYSH…PQKE) and 76–119 (AAEC…SQEL).

Belongs to the MraZ family. As to quaternary structure, forms oligomers.

The protein localises to the cytoplasm. It is found in the nucleoid. The chain is Transcriptional regulator MraZ from Carboxydothermus hydrogenoformans (strain ATCC BAA-161 / DSM 6008 / Z-2901).